The following is a 314-amino-acid chain: Signal peptidase I (314 aa).

A helical membrane pass occupies residues 5–25; that stretch reads LTIFLLISTLVTGIFWSFYCI. Topologically, residues 26-63 are cytoplasmic; sequence KSFKNYLINKKIINNNNFHQEKIEKSKNKTYFLKSLAS. The helical transmembrane segment at 64–84 threads the bilayer; sequence FFPIFLAIFIIRSFIYEPFQI. Residues 85–314 lie on the Extracellular side of the membrane; sequence PSGSMMPTLL…IRINRIGSIH (230 aa). Residues Ser88 and Lys143 contribute to the active site.

It belongs to the peptidase S26 family.

The protein resides in the cell membrane. The catalysed reaction is Cleavage of hydrophobic, N-terminal signal or leader sequences from secreted and periplasmic proteins.. The chain is Signal peptidase I (lepB) from Buchnera aphidicola subsp. Acyrthosiphon pisum (strain APS) (Acyrthosiphon pisum symbiotic bacterium).